A 275-amino-acid chain; its full sequence is Dihydroxyacetone phosphatase (275 aa).

Asp10 acts as the Nucleophile in catalysis. Mg(2+) contacts are provided by Asp10, Asp12, and Asp206. The active-site Proton donor/acceptor is Asp12.

It belongs to the HAD-like hydrolase superfamily. As to quaternary structure, homohexamer. Mg(2+) is required as a cofactor.

The enzyme catalyses dihydroxyacetone phosphate + H2O = dihydroxyacetone + phosphate. Functionally, catalyzes dephosphorylation of dihydroxyacetone phosphate (DHAP) to produce 1,3-dihydroxyacetone (DHA). Is the main enzyme responsible for DHA production from catabolism of sugars (glucose, fructose, and sucrose) in C.glutamicum. Displays no activity toward nucleoside monophosphates (AMP, CMP, GMP, or UMP). The protein is Dihydroxyacetone phosphatase of Corynebacterium glutamicum (strain R).